A 102-amino-acid chain; its full sequence is MNPLKDLRASLPRLAFMAACTLLSATLPDLAQAGGGLQRVNHFMASIVVVLRGASVATVTIAIIWAGYKLLFRHADVLDVVRVVLAGLLIGASAEIARYLLT.

Residues 1 to 33 (MNPLKDLRASLPRLAFMAACTLLSATLPDLAQA) form the signal peptide. A run of 2 helical transmembrane segments spans residues 47-67 (IVVV…IWAG) and 77-97 (VLDV…AEIA).

This sequence belongs to the PtlA family.

The protein localises to the cell membrane. The protein is Type IV secretion system protein PtlA homolog (ptlA) of Bordetella parapertussis (strain 12822 / ATCC BAA-587 / NCTC 13253).